A 219-amino-acid polypeptide reads, in one-letter code: Adenylate kinase (219 aa).

Residue 12–17 coordinates ATP; it reads GAGKGT. Residues 32-61 form an NMP region; the sequence is STGDMLRAAVKAGTPIGLQAKAVMDAGELV. AMP is bound by residues Thr33, Arg38, 59 to 61, 87 to 90, and Gln94; these read ELV and GYPR. Residues 128 to 165 form an LID region; the sequence is GRFSCARCGEGYHDRYKLPKVADICDVCGSKEFKRRPD. Arg129 is a binding site for ATP. 4 residues coordinate Zn(2+): Cys132, Cys135, Cys152, and Cys155. 2 residues coordinate AMP: Arg162 and Arg174. Ala202 is an ATP binding site.

Belongs to the adenylate kinase family. As to quaternary structure, monomer.

The protein localises to the cytoplasm. It carries out the reaction AMP + ATP = 2 ADP. The protein operates within purine metabolism; AMP biosynthesis via salvage pathway; AMP from ADP: step 1/1. Catalyzes the reversible transfer of the terminal phosphate group between ATP and AMP. Plays an important role in cellular energy homeostasis and in adenine nucleotide metabolism. This Sphingopyxis alaskensis (strain DSM 13593 / LMG 18877 / RB2256) (Sphingomonas alaskensis) protein is Adenylate kinase.